A 421-amino-acid chain; its full sequence is 3-isopropylmalate dehydratase large subunit (421 aa).

C300, C360, and C363 together coordinate [4Fe-4S] cluster.

Belongs to the aconitase/IPM isomerase family. LeuC type 2 subfamily. As to quaternary structure, heterodimer of LeuC and LeuD. Requires [4Fe-4S] cluster as cofactor.

It catalyses the reaction (2R,3S)-3-isopropylmalate = (2S)-2-isopropylmalate. It functions in the pathway amino-acid biosynthesis; L-leucine biosynthesis; L-leucine from 3-methyl-2-oxobutanoate: step 2/4. In terms of biological role, catalyzes the isomerization between 2-isopropylmalate and 3-isopropylmalate, via the formation of 2-isopropylmaleate. This is 3-isopropylmalate dehydratase large subunit from Moorella thermoacetica (strain ATCC 39073 / JCM 9320).